A 435-amino-acid chain; its full sequence is 3-phosphoshikimate 1-carboxyvinyltransferase (435 aa).

3-phosphoshikimate contacts are provided by Lys-15, Ser-16, and Arg-20. Lys-15 serves as a coordination point for phosphoenolpyruvate. Residues Gly-96 and Arg-124 each coordinate phosphoenolpyruvate. Ser-169, Gln-171, Thr-195, Asp-319, and Lys-346 together coordinate 3-phosphoshikimate. Phosphoenolpyruvate is bound at residue Gln-171. Asp-319 serves as the catalytic Proton acceptor. Residues Arg-350 and Arg-394 each contribute to the phosphoenolpyruvate site.

It belongs to the EPSP synthase family. Monomer.

Its subcellular location is the cytoplasm. It catalyses the reaction 3-phosphoshikimate + phosphoenolpyruvate = 5-O-(1-carboxyvinyl)-3-phosphoshikimate + phosphate. Its pathway is metabolic intermediate biosynthesis; chorismate biosynthesis; chorismate from D-erythrose 4-phosphate and phosphoenolpyruvate: step 6/7. Catalyzes the transfer of the enolpyruvyl moiety of phosphoenolpyruvate (PEP) to the 5-hydroxyl of shikimate-3-phosphate (S3P) to produce enolpyruvyl shikimate-3-phosphate and inorganic phosphate. This chain is 3-phosphoshikimate 1-carboxyvinyltransferase, found in Chloroherpeton thalassium (strain ATCC 35110 / GB-78).